Reading from the N-terminus, the 503-residue chain is Cytochrome P450 11B1, mitochondrial (503 aa).

A mitochondrion-targeting transit peptide spans 1–24 (MALRAKAEVCMAVPWLSLQRAQAL). Cys450 provides a ligand contact to heme.

Belongs to the cytochrome P450 family. Heme is required as a cofactor. Expressed in the zona fasciculata/reticularis of the adrenal cortex.

The protein resides in the mitochondrion inner membrane. It carries out the reaction a steroid + 2 reduced [adrenodoxin] + O2 + 2 H(+) = an 11beta-hydroxysteroid + 2 oxidized [adrenodoxin] + H2O. The catalysed reaction is 11-deoxycortisol + 2 reduced [adrenodoxin] + O2 + 2 H(+) = cortisol + 2 oxidized [adrenodoxin] + H2O. The enzyme catalyses 21-hydroxyprogesterone + 2 reduced [adrenodoxin] + O2 + 2 H(+) = corticosterone + 2 oxidized [adrenodoxin] + H2O. The protein operates within steroid biosynthesis; glucocorticoid biosynthesis. Its pathway is steroid hormone biosynthesis. Functionally, a cytochrome P450 monooxygenase involved in the biosynthesis of adrenal corticoids. Catalyzes a variety of reactions that are essential for many species, including detoxification, defense, and the formation of endogenous chemicals like steroid hormones. Steroid 11beta, 18- and 19-hydroxylase with preferred regioselectivity at 11beta, then 18, and lastly 19. Catalyzes the hydroxylation of 11-deoxycortisol and 11-deoxycorticosterone (21-hydroxyprogesterone) at 11beta position, yielding cortisol or corticosterone, respectively, but cannot produce aldosterone. Mechanistically, uses molecular oxygen inserting one oxygen atom into a substrate for hydroxylation and reducing the second into a water molecule. Two electrons are provided by NADPH via a two-protein mitochondrial transfer system comprising flavoprotein FDXR (adrenodoxin/ferredoxin reductase) and nonheme iron-sulfur protein FDX1 or FDX2 (adrenodoxin/ferredoxin). Due to its lack of 18-oxidation activity, it is incapable of generating aldosterone. Could also be involved in the androgen metabolic pathway. The polypeptide is Cytochrome P450 11B1, mitochondrial (Homo sapiens (Human)).